The sequence spans 121 residues: Auxin-responsive protein SAUR32 (121 aa).

The protein belongs to the ARG7 family. As to expression, expressed in roots, leaves and stems.

It is found in the nucleus. It localises to the cytoplasm. Its function is as follows. May play a role in the apical hook development. This Arabidopsis thaliana (Mouse-ear cress) protein is Auxin-responsive protein SAUR32.